We begin with the raw amino-acid sequence, 113 residues long: SVLQPCQPINETISVEKDGCPKCLVFQTSICSGHCITKDPSYKSPLSTVYQRVCTYRDVRYETVRLPDCRPGVDPHVTFPVALSCDCNLCTMDTSDCAIQSLRPDFCMSQRAP.

6 disulfide bridges follow: C6–C54, C20–C69, C23–C107, C31–C85, C35–C87, and C90–C97. N-linked (GlcNAc...) asparagine glycosylation is present at N10.

The protein belongs to the glycoprotein hormones subunit beta family. Heterodimer of an alpha and a beta chain.

Its subcellular location is the secreted. Involved in gametogenesis and steroidogenesis. The sequence is that of Gonadotropin subunit beta (cgb) from Muraenesox cinereus (Daggertooth pike conger).